Reading from the N-terminus, the 333-residue chain is Phosphate acetyltransferase (333 aa).

It belongs to the phosphate acetyltransferase and butyryltransferase family. In terms of assembly, homodimer.

The protein resides in the cell membrane. It carries out the reaction acetyl-CoA + phosphate = acetyl phosphate + CoA. It participates in metabolic intermediate biosynthesis; acetyl-CoA biosynthesis; acetyl-CoA from acetate: step 2/2. This is Phosphate acetyltransferase (pta) from Methanosarcina thermophila.